The following is a 436-amino-acid chain: MSDDQSLSEVEMSPVGSEDPSLTPDPLPPHAHSSPDDDEETKVKKEQDSEDERFPVCIREAVSQVLSGYDWTLVPMPVRVNGGSKSKPHVKRPMNAFMVWAQAARRKLADQYPHLHNAELSKTLGKLWRLLNENDKRPFIEEAERLRMQHKKDHPDYKYQPRRRKNGKPNPGEGDGSSEAEGGAASIQAHYKNSHLDHRHGSPMSDGNSEHSAGQSHGPPTPPTTPKTELQAGKSDGKRDGSRSLGEGGKPHIDFGNVDIGEISHDVMANMETFDVNEFDQYLPPNGHAGHPSHIGGYTSSYGLSGALAAGPSAWALAKQHPQTDSKAQVKTESSSTSHYTEQPSTSQLTYTSLGLPHYGSAFPSISRPQFDYADHQPSSSYYSHSSQASSLYSAFSYMGPPQRPLYTAISDSPSVAQSHSPTHWEQPVYTTLSRP.

5 disordered regions span residues 1-55 (MSDD…ERFP), 145-183 (RLRM…AEGG), 195-257 (HLDH…DFGN), 322-346 (PQTD…QPST), and 413-436 (SPSV…LSRP). Lysine 44 participates in a covalent cross-link: Glycyl lysine isopeptide (Lys-Gly) (interchain with G-Cter in SUMO). A dimerization (DIM) region spans residues 48–88 (DSEDERFPVCIREAVSQVLSGYDWTLVPMPVRVNGGSKSKP). Residues 90–158 (VKRPMNAFMV…QHKKDHPDYK (69 aa)) constitute a DNA-binding region (HMG box). Over residues 145–159 (RLRMQHKKDHPDYKY) the composition is skewed to basic and acidic residues. 2 stretches are compositionally biased toward polar residues: residues 205-215 (SDGNSEHSAGQ) and 331-346 (KTES…QPST). Residues 209 to 295 (SEHSAGQSHG…NGHAGHPSHI (87 aa)) form a transactivation domain (TAM) region. The interval 327-436 (KAQVKTESSS…QPVYTTLSRP (110 aa)) is transactivation domain (TAC). A Glycyl lysine isopeptide (Lys-Gly) (interchain with G-Cter in SUMO) cross-link involves residue lysine 331.

In terms of assembly, interacts with the sumoylation factors ube2i/ubc9 and sumo1. Post-translationally, sumoylated.

The protein resides in the cytoplasm. It is found in the nucleus. Functionally, acts early in neural crest formation, functioning redundantly with the other group E Sox factors sox8 and sox9 to induce neural crest progenitors. Acts downstream of wnt-signaling at the neural plate border. Involved in the specification of neural crest progenitors fated to form the pigment cell lineage. The protein is Transcription factor Sox-10 of Xenopus tropicalis (Western clawed frog).